Here is a 319-residue protein sequence, read N- to C-terminus: Thioredoxin reductase (319 aa).

36-48 (EGFMAGGVAAGGQ) serves as a coordination point for FAD. The cysteines at positions 144 and 147 are disulfide-linked. 289–298 (DVQDKVYRQA) serves as a coordination point for FAD.

It belongs to the class-II pyridine nucleotide-disulfide oxidoreductase family. Homodimer. The cofactor is FAD.

It carries out the reaction [thioredoxin]-dithiol + NADP(+) = [thioredoxin]-disulfide + NADPH + H(+). This Dictyostelium discoideum (Social amoeba) protein is Thioredoxin reductase (trrA).